Reading from the N-terminus, the 96-residue chain is MSKIRPLGDRVVVKRSEDETKTPCGIVIPDSAAEKQDQGTVVALGPGKKDSEGARVPMEVRLGDRVLFGKYAGQSIKVDDEDLMVMREEDIVAVIE.

Belongs to the GroES chaperonin family. Heptamer of 7 subunits arranged in a ring. Interacts with the chaperonin GroEL.

It localises to the cytoplasm. Together with the chaperonin GroEL, plays an essential role in assisting protein folding. The GroEL-GroES system forms a nano-cage that allows encapsulation of the non-native substrate proteins and provides a physical environment optimized to promote and accelerate protein folding. GroES binds to the apical surface of the GroEL ring, thereby capping the opening of the GroEL channel. The chain is Co-chaperonin GroES from Tremblaya princeps.